The chain runs to 396 residues: Putative pyridoxal phosphate-dependent acyltransferase (396 aa).

111–112 serves as a coordination point for pyridoxal 5'-phosphate; that stretch reads GF. A substrate-binding site is contributed by His136. Pyridoxal 5'-phosphate-binding positions include Ser186, 211–214, and 241–244; these read DDAH and TLSK. An N6-(pyridoxal phosphate)lysine modification is found at Lys244. A substrate-binding site is contributed by Thr358.

It belongs to the class-II pyridoxal-phosphate-dependent aminotransferase family. As to quaternary structure, homodimer. Pyridoxal 5'-phosphate is required as a cofactor.

In Bacillus anthracis, this protein is Putative pyridoxal phosphate-dependent acyltransferase.